The sequence spans 94 residues: Large ribosomal subunit protein bL28 (94 aa).

The tract at residues methionine 1 to serine 21 is disordered. The segment covering glycine 11–histidine 20 has biased composition (polar residues).

Belongs to the bacterial ribosomal protein bL28 family.

This Leptospira interrogans serogroup Icterohaemorrhagiae serovar copenhageni (strain Fiocruz L1-130) protein is Large ribosomal subunit protein bL28.